A 306-amino-acid chain; its full sequence is 4-hydroxy-tetrahydrodipicolinate synthase (306 aa).

Residue Thr49 participates in pyruvate binding. Catalysis depends on Tyr136, which acts as the Proton donor/acceptor. Residue Lys164 is the Schiff-base intermediate with substrate of the active site. Ile207 is a pyruvate binding site.

This sequence belongs to the DapA family. As to quaternary structure, homotetramer; dimer of dimers.

The protein resides in the cytoplasm. The catalysed reaction is L-aspartate 4-semialdehyde + pyruvate = (2S,4S)-4-hydroxy-2,3,4,5-tetrahydrodipicolinate + H2O + H(+). It functions in the pathway amino-acid biosynthesis; L-lysine biosynthesis via DAP pathway; (S)-tetrahydrodipicolinate from L-aspartate: step 3/4. Catalyzes the condensation of (S)-aspartate-beta-semialdehyde [(S)-ASA] and pyruvate to 4-hydroxy-tetrahydrodipicolinate (HTPA). This Haloarcula marismortui (strain ATCC 43049 / DSM 3752 / JCM 8966 / VKM B-1809) (Halobacterium marismortui) protein is 4-hydroxy-tetrahydrodipicolinate synthase.